We begin with the raw amino-acid sequence, 127 residues long: MNIPDNLRYTKDHEWIKLLEDGLTALVGITDFAQSELGDIVFVETKPVGTKVAAHGTFGTVEAVKTVADLFAPAAGEIVEVNAGLDDAAIVNSDPYNEGWIVKMKLDNPADVEALLSPADYSALIGE.

A Lipoyl-binding domain is found at 24-105 (TALVGITDFA…YNEGWIVKMK (82 aa)). The residue at position 65 (lysine 65) is an N6-lipoyllysine.

Belongs to the GcvH family. As to quaternary structure, the glycine cleavage system is composed of four proteins: P, T, L and H. It depends on (R)-lipoate as a cofactor.

Functionally, the glycine cleavage system catalyzes the degradation of glycine. The H protein shuttles the methylamine group of glycine from the P protein to the T protein. The protein is Glycine cleavage system H protein of Chlorobaculum tepidum (strain ATCC 49652 / DSM 12025 / NBRC 103806 / TLS) (Chlorobium tepidum).